The primary structure comprises 142 residues: ATP synthase F(0) complex subunit C3, mitochondrial (142 aa).

The transit peptide at 1 to 67 (MFACAKLACT…REFQTSAISR (67 aa)) directs the protein to the mitochondrion. The helical transmembrane segment at 83 to 103 (VGVAGSGAGIGTVFGSLIIGY) threads the bilayer. At Lys-110 the chain carries N6,N6,N6-trimethyllysine. The helical transmembrane segment at 118–138 (ILGFALSEAMGLFCLMVAFLI) threads the bilayer.

This sequence belongs to the ATPase C chain family. As to quaternary structure, F-type ATPases have 2 components, CF(1) - the catalytic core - and CF(0) - the membrane proton channel. CF(1) has five subunits: alpha(3), beta(3), gamma(1), delta(1), epsilon(1). CF(0) has three main subunits: a, b and c. Interacts with TMEM70 and TMEM242. In terms of processing, trimethylated by ATPSCKMT at Lys-110. Methylation is required for proper incorporation of the C subunit into the ATP synthase complex and mitochondrial respiration.

It localises to the mitochondrion membrane. Mitochondrial membrane ATP synthase (F(1)F(0) ATP synthase or Complex V) produces ATP from ADP in the presence of a proton gradient across the membrane which is generated by electron transport complexes of the respiratory chain. F-type ATPases consist of two structural domains, F(1) - containing the extramembraneous catalytic core and F(0) - containing the membrane proton channel, linked together by a central stalk and a peripheral stalk. During catalysis, ATP synthesis in the catalytic domain of F(1) is coupled via a rotary mechanism of the central stalk subunits to proton translocation. Part of the complex F(0) domain. A homomeric c-ring of probably 10 subunits is part of the complex rotary element. The sequence is that of ATP synthase F(0) complex subunit C3, mitochondrial from Homo sapiens (Human).